Consider the following 308-residue polypeptide: Inactive C-alpha-formylglycine-generating enzyme 2 (308 aa).

Residues 1–33 (MRSEFWFPSMGSLLPPVLLLWLLSCPRLQLGHA) form the signal peptide. An intrachain disulfide couples C163 to C297. N-linked (GlcNAc...) asparagine glycosylation is present at N198. Residues N201, L202, D215, F217, D236, G239, V241, and E243 each coordinate Ca(2+). A compositionally biased stretch (polar residues) spans 281–291 (RMGNTPDSASD). A disordered region spans residues 281-308 (RMGNTPDSASDNLGFRCASSAGRPKEDL). Residues 305–308 (KEDL) carry the Non-canonical ER retention motif motif.

This sequence belongs to the sulfatase-modifying factor family. Homodimer and heterodimer with SUMF1.

It localises to the endoplasmic reticulum lumen. Its function is as follows. Lacks formylglycine generating activity and is unable to convert newly synthesized inactive sulfatases to their active form. Inhibits the activation of sulfatases by SUMF1. The sequence is that of Inactive C-alpha-formylglycine-generating enzyme 2 from Mus musculus (Mouse).